The sequence spans 95 residues: Small ribosomal subunit protein bS20c (95 aa).

Belongs to the bacterial ribosomal protein bS20 family.

It is found in the plastid. Its subcellular location is the chloroplast. Functionally, binds directly to 16S ribosomal RNA. The chain is Small ribosomal subunit protein bS20c from Pyropia yezoensis (Susabi-nori).